Reading from the N-terminus, the 105-residue chain is Large ribosomal subunit protein bL21 (105 aa).

This sequence belongs to the bacterial ribosomal protein bL21 family. Part of the 50S ribosomal subunit. Contacts protein L20.

This protein binds to 23S rRNA in the presence of protein L20. The protein is Large ribosomal subunit protein bL21 of Thermotoga maritima (strain ATCC 43589 / DSM 3109 / JCM 10099 / NBRC 100826 / MSB8).